A 123-amino-acid chain; its full sequence is Histone H1-like protein HC1 (123 aa).

Residues 54–123 (IKAEKSGLLK…KPSKARGFRK (70 aa)) form a disordered region. Basic residues predominate over residues 61–75 (LLKRKPSTKAPAKVK). Over residues 85-102 (KSSAAAAKTSKAVKASKP) the composition is skewed to low complexity. Over residues 103-123 (ASKKTAAKKVKKPSKARGFRK) the composition is skewed to basic residues.

It belongs to the histone H1/H5 family. HCT subfamily.

Might have a role analogous to that of eukaryotic histone proteins. This is Histone H1-like protein HC1 (hctA) from Chlamydia pneumoniae (Chlamydophila pneumoniae).